Reading from the N-terminus, the 140-residue chain is Transmembrane protein 234 homolog (140 aa).

A run of 4 helical transmembrane segments spans residues 14–34 (IYAVLSILLVAIMWGATNPFI), 64–84 (WQYLLPLVINQLGSIVYVLTL), 88–108 (ELSLTVPMANSLTFVFTAITA), and 116–136 (SGWKIYCGMTLVILGTVICGL).

This sequence belongs to the TMEM234 family.

The protein localises to the membrane. The sequence is that of Transmembrane protein 234 homolog from Anopheles gambiae (African malaria mosquito).